We begin with the raw amino-acid sequence, 503 residues long: GTPase Obg (503 aa).

The Obg domain occupies P2–M159. Residues A160 to K340 enclose the OBG-type G domain. GTP is bound by residues G166 to S173, F191 to V195, D212 to G215, N292 to D295, and S321 to V323. Residues S173 and T193 each coordinate Mg(2+). In terms of domain architecture, OCT spans E371 to P444. The span at R457–R476 shows a compositional bias: basic and acidic residues. The segment at R457 to G503 is disordered.

Belongs to the TRAFAC class OBG-HflX-like GTPase superfamily. OBG GTPase family. In terms of assembly, monomer. It depends on Mg(2+) as a cofactor.

It localises to the cytoplasm. Its function is as follows. An essential GTPase which binds GTP, GDP and possibly (p)ppGpp with moderate affinity, with high nucleotide exchange rates and a fairly low GTP hydrolysis rate. Plays a role in control of the cell cycle, stress response, ribosome biogenesis and in those bacteria that undergo differentiation, in morphogenesis control. The polypeptide is GTPase Obg (Corynebacterium jeikeium (strain K411)).